A 376-amino-acid polypeptide reads, in one-letter code: WW domain-binding protein 4 (376 aa).

The segment at 11 to 42 (KFCDYCKCWIADNRPSVEFHERGKNHKENVAR) adopts a Matrin-type zinc-finger fold. The span at 94-111 (PTVSPVISTVQPTPTSNQ) shows a compositional bias: polar residues. Disordered regions lie at residues 94–127 (PTVS…ASKG) and 192–324 (WEKP…ECLS). Residues 114-123 (EKKKKKKKKE) are compositionally biased toward basic residues. WW domains follow at residues 123 to 156 (EASK…KPEG) and 164 to 197 (TAAK…KPED). Basic and acidic residues predominate over residues 219-272 (EDAKSSDSHSDSEGEQKKAGEASTETKKLIIKFKEKNKSTEKRIGPEIQKEKST). Phosphoserine occurs at positions 228 and 230. The interaction with SNRNP200 stretch occupies residues 357–375 (KKRRLENGKSRNLRQRGDD).

Component of the spliceosome B complex. Associated with U2 snRNPs. Binds splicing factors SNRPB, SNRPC and SF1. Interacts via the WW domains with the Pro-rich domains of KHDRBS1/SAM68. Interacts via the WW domains with the Pro-rich domains of WBP11. Interacts with SNRNP200.

Its subcellular location is the nucleus. It is found in the nucleus speckle. Functionally, involved in pre-mRNA splicing as a component of the spliceosome. May play a role in cross-intron bridging of U1 and U2 snRNPs in the mammalian A complex. The chain is WW domain-binding protein 4 (Wbp4) from Mus musculus (Mouse).